The following is a 205-amino-acid chain: Holliday junction branch migration complex subunit RuvA (205 aa).

Positions 1 to 64 are domain I; that stretch reads MIGRLRGVLV…EDAQLLYGFI (64 aa). A domain II region spans residues 65 to 143; it reads TKQERALFRL…SLMEASAGSE (79 aa). Residues 144–156 form a flexible linker region; sequence REFVLQSNYSPAP. The domain III stretch occupies residues 157-205; that stretch reads TVNSAEEDAISALISLGYKPPQASKSVSAAYKEGMDSETLIKAALKSML.

The protein belongs to the RuvA family. As to quaternary structure, homotetramer. Forms an RuvA(8)-RuvB(12)-Holliday junction (HJ) complex. HJ DNA is sandwiched between 2 RuvA tetramers; dsDNA enters through RuvA and exits via RuvB. An RuvB hexamer assembles on each DNA strand where it exits the tetramer. Each RuvB hexamer is contacted by two RuvA subunits (via domain III) on 2 adjacent RuvB subunits; this complex drives branch migration. In the full resolvosome a probable DNA-RuvA(4)-RuvB(12)-RuvC(2) complex forms which resolves the HJ.

The protein localises to the cytoplasm. In terms of biological role, the RuvA-RuvB-RuvC complex processes Holliday junction (HJ) DNA during genetic recombination and DNA repair, while the RuvA-RuvB complex plays an important role in the rescue of blocked DNA replication forks via replication fork reversal (RFR). RuvA specifically binds to HJ cruciform DNA, conferring on it an open structure. The RuvB hexamer acts as an ATP-dependent pump, pulling dsDNA into and through the RuvAB complex. HJ branch migration allows RuvC to scan DNA until it finds its consensus sequence, where it cleaves and resolves the cruciform DNA. The sequence is that of Holliday junction branch migration complex subunit RuvA from Shewanella baltica (strain OS223).